A 417-amino-acid polypeptide reads, in one-letter code: Phosphoglycerate kinase, cytosolic (417 aa).

Positions 23, 24, 25, 26, 39, 61, 62, 64, 65, 132, 168, and 169 each coordinate (2R)-3-phosphoglycerate. Positions 214 and 215 each coordinate ADP. CDP is bound at residue Gly214. 2 residues coordinate AMP: Ala215 and Lys216. Residue Ala215 coordinates ATP. Ala215 lines the Mg(2+) pocket. A (2R)-3-phosphoglycerate-binding site is contributed by Lys216. CDP is bound at residue Asp219. Asp219 contacts Mg(2+). 2 residues coordinate ADP: Lys220 and Gly238. Lys220 is a binding site for AMP. Lys220 contacts ATP. Gly238 contributes to the CDP binding site. Residues Ala239 and Ala311 each coordinate AMP. 2 residues coordinate ATP: Ala239 and Ala311. Positions 311 and 335 each coordinate ADP. 2 residues coordinate CDP: Gly336 and Phe341. Phe341, Glu342, Asp374, and Thr375 together coordinate ADP. Residue Glu342 participates in AMP binding. Glu342, Asp374, and Thr375 together coordinate ATP. Asp374 contacts Mg(2+).

The protein belongs to the phosphoglycerate kinase family. As to quaternary structure, monomer. Requires Mg(2+) as cofactor.

The protein localises to the cytoplasm. It catalyses the reaction (2R)-3-phosphoglycerate + ATP = (2R)-3-phospho-glyceroyl phosphate + ADP. Its pathway is carbohydrate degradation; glycolysis; pyruvate from D-glyceraldehyde 3-phosphate: step 2/5. The chain is Phosphoglycerate kinase, cytosolic (PGKB) from Leishmania mexicana.